Reading from the N-terminus, the 83-residue chain is Toxin To12 (83 aa).

An N-terminal signal peptide occupies residues methionine 1–alanine 19. An LCN-type CS-alpha/beta domain is found at lysine 20–glycine 82. 4 disulfide bridges follow: cysteine 30–cysteine 81, cysteine 34–cysteine 57, cysteine 42–cysteine 62, and cysteine 46–cysteine 64. Cysteine amide is present on cysteine 81.

It belongs to the long (4 C-C) scorpion toxin superfamily. Sodium channel inhibitor family. Beta subfamily. Expressed by the venom gland.

The protein localises to the secreted. Beta toxins bind voltage-independently at site-4 of sodium channels (Nav) and shift the voltage of activation toward more negative potentials thereby affecting sodium channel activation and promoting spontaneous and repetitive firing. The polypeptide is Toxin To12 (Tityus obscurus (Amazonian scorpion)).